Reading from the N-terminus, the 437-residue chain is Ribosomal protein uS12 methylthiotransferase RimO (437 aa).

Positions 5-116 constitute an MTTase N-terminal domain; that stretch reads PTIAISHLGC…IVEIVERVET (112 aa). Residues Cys-14, Cys-50, Cys-79, Cys-154, Cys-158, and Cys-161 each contribute to the [4Fe-4S] cluster site. The region spanning 140–369 is the Radical SAM core domain; sequence TTSEGVAYLR…MLTQQPISER (230 aa). A TRAM domain is found at 372-437; sequence QAYIGQTVDV…DTYDLYGEIV (66 aa).

It belongs to the methylthiotransferase family. RimO subfamily. [4Fe-4S] cluster is required as a cofactor.

The protein resides in the cytoplasm. It catalyses the reaction L-aspartate(89)-[ribosomal protein uS12]-hydrogen + (sulfur carrier)-SH + AH2 + 2 S-adenosyl-L-methionine = 3-methylsulfanyl-L-aspartate(89)-[ribosomal protein uS12]-hydrogen + (sulfur carrier)-H + 5'-deoxyadenosine + L-methionine + A + S-adenosyl-L-homocysteine + 2 H(+). Functionally, catalyzes the methylthiolation of an aspartic acid residue of ribosomal protein uS12. The chain is Ribosomal protein uS12 methylthiotransferase RimO from Microcystis aeruginosa (strain NIES-843 / IAM M-2473).